Reading from the N-terminus, the 82-residue chain is Defensin-like protein 275 (82 aa).

Positions 1–23 (MALSKFQLVALLITYTLLFSCQS) are cleaved as a signal peptide. 4 disulfide bridges follow: Cys36-Cys78, Cys42-Cys65, Cys48-Cys76, and Cys52-Cys77.

This sequence belongs to the DEFL family.

The protein resides in the secreted. The sequence is that of Defensin-like protein 275 from Arabidopsis thaliana (Mouse-ear cress).